Reading from the N-terminus, the 51-residue chain is Insulin (51 aa).

Cystine bridges form between C7–C37, C19–C50, and C36–C41.

It belongs to the insulin family. In terms of assembly, heterodimer of a B chain and an A chain linked by two disulfide bonds.

The protein resides in the secreted. In terms of biological role, insulin decreases blood glucose concentration. It increases cell permeability to monosaccharides, amino acids and fatty acids. It accelerates glycolysis, the pentose phosphate cycle, and glycogen synthesis in liver. The polypeptide is Insulin (INS) (Hystrix cristata (North African crested porcupine)).